A 961-amino-acid polypeptide reads, in one-letter code: Retinoblastoma-like protein homolog lin-35 (961 aa).

2 disordered regions span residues 1–43 (MPKR…PPAK) and 55–129 (GGVQ…TPPP). Polar residues predominate over residues 68 to 81 (ELTQMTIKQETEGN). The span at 107–119 (GEDDDYEEDDADS) shows a compositional bias: acidic residues. S714 bears the Phosphoserine; by CDK4 mark. At T719 the chain carries Phosphothreonine; by CDK4.

Belongs to the retinoblastoma protein (RB) family. As to quaternary structure, component of the DRM complex, at least composed of lin-9, lin-35, lin-37, lin-52, lin-53, lin-54, dpl-1 and efl-1. Interacts with lin-53. Interacts (via C-terminus) with dpl-1 (via C-terminus) and efl-1 (via C-terminus). Interacts (via C-terminus) with lin-8. Post-translationally, phosphorylated by the cyclin dependent kinase cdk-4. Phosphorylation inhibits the transcriptional repressor activity of lin-35 and allows for progression through the G1 phase of the cell cycle during postembryonic development.

It is found in the nucleus. Its function is as follows. Key regulator of cell division which acts as a transcriptional repressor and negatively regulates cell cycle progression in its active unphosphorylated form, but allows cell cycle progression when phosphorylated. When unphosphorylated and in its active form, interacts with E2F transcription factors such as efl-1 to repress their transcriptional activity and negatively regulate the progression through the G1 phase of the cell cycle during postembryonic development. May furthermore act with cell cycle regulator cki-1 to negatively regulate cell cycle progression. Acts redundantly with lin-53, fzr-1 and lin-23 to control cell cycle progression by regulating the expression of G1 phase cyclins. In particular, negatively regulates the expression of the cyclin E homolog cye-1, which is essential for the G1/S phase transition. Regulates cell division in the intestinal lineage, repressing the expression of genes such as cdc-25.2, which are required for intestinal cells to transition from the karyokinesis cell cycle (also known as nuclear division) to endoreplication, a specific growth pathway in the intestinal epithelium required for feeding and gut development in growing larvae during the L1 stage molt. Its role as a transcriptional repressor in the regulation of intestinal cell division during postembryonic development is most likely in complex with an E2F cell cycle regulatory transcription factor efl-1 and its binding partner the synthetic multivulva class B protein dpl-1. Synthetic multivulva (synMuv) class B protein. SynMuv proteins are required to repress the induction of vulval development by Ras signaling and probably act by forming the multiprotein DRM complex that represses transcription. Together with synMuv class B protein lin-53, and redundantly with synMuv class A protein lin-15A, represses transcription to control vulval development, most likely through antagonization of the Ras-signaling pathway in the major hypodermal syncytium hyp7. Acts redundantly with the transcriptional corepressor spr-1 and the zinc finger protein zfp-2 to play a role in vulval morphogenesis, promote germline proliferation and somatic gonad development. Acts redundantly with ubc-18 in the regulation of pharyngeal morphogenesis during embryonic development by negatively regulating the expression of proteins such as sup-35. Functions with the SWI/SNF complex and proteins such as pha-1 to regulate larval development. Functions redundantly with xnp-1 to regulate somatic gonad development. Acts redundantly with slr-2 to regulate the expression of intestinal genes required for nutrient utilization. Regulates transcription in response to starvation. Furthermore, in response to starvation, promotes germ cell programmed cell death by negatively regulating the expression of the anti-apoptotic protein ced-9. Conversely, in conjunction with mcd-1, efl-1 and the synthetic multivulva class B proteins dpl-1, lin-37 and lin-52, may also regulate transcription to promote programmed cell death independently of ced-1, ced-8 and ced-9 cell death pathways. Directly involved in heterochromatin formation by maintaining overall chromatin structure and, in particular, that of constitutive heterochromatin by stabilizing histone methylation. In particular, negatively regulates the expression of mes-4, a histone methyltransferase that controls the expression of germline specific genes. May play a role in double strand break formation during meiosis. May suppress sensitivity to RNAi. May play a role in the response to endoplasmic reticulum (ER) stress. This chain is Retinoblastoma-like protein homolog lin-35, found in Caenorhabditis elegans.